Here is a 445-residue protein sequence, read N- to C-terminus: Trigger factor (445 aa).

The PPIase FKBP-type domain maps to 172–257 (GDQVVINFVG…VKSVNWAHLP (86 aa)).

Belongs to the FKBP-type PPIase family. Tig subfamily.

It is found in the cytoplasm. It catalyses the reaction [protein]-peptidylproline (omega=180) = [protein]-peptidylproline (omega=0). Involved in protein export. Acts as a chaperone by maintaining the newly synthesized protein in an open conformation. Functions as a peptidyl-prolyl cis-trans isomerase. The sequence is that of Trigger factor from Polynucleobacter necessarius subsp. necessarius (strain STIR1).